A 116-amino-acid polypeptide reads, in one-letter code: U16-barytoxin-Tl1c (116 aa).

An N-terminal signal peptide occupies residues 1–20 (MKTIIVFLSLLVLATKFGDA). The propeptide occupies 21-76 (NEGVNQEQMKEVIQNEFREDFLNEMAPMSLLQQLEAIESTLLEKEADRNSRQKRCN). Disulfide bonds link Cys75–Cys90, Cys82–Cys95, and Cys89–Cys110.

It belongs to the neurotoxin 14 (magi-1) family. 06 (ICK-Trit) subfamily. Expressed by the venom gland.

It localises to the secreted. Its function is as follows. Ion channel inhibitor. The protein is U16-barytoxin-Tl1c of Trittame loki (Brush-footed trapdoor spider).